Here is a 513-residue protein sequence, read N- to C-terminus: Maturase K (513 aa).

It belongs to the intron maturase 2 family. MatK subfamily.

Its subcellular location is the plastid. It is found in the chloroplast. Its function is as follows. Usually encoded in the trnK tRNA gene intron. Probably assists in splicing its own and other chloroplast group II introns. The chain is Maturase K from Arundo donax (Giant reed).